We begin with the raw amino-acid sequence, 452 residues long: Gastrin/cholecystokinin type B receptor (452 aa).

Over 1–57 (MELLKLNRSLPGPGPGAALCRPEGPLLNGSGAGNLSCEPPRIRGAGTRELELAVRIT) the chain is Extracellular. N-linked (GlcNAc...) asparagine glycans are attached at residues N7, N28, and N34. Residues 58-78 (LYAAIFLMSVAGNVLIIVVLG) form a helical membrane-spanning segment. At 79 to 99 (LSRRLRTVTNAFLLSLAVSDL) the chain is on the cytoplasmic side. Residues 100–120 (LLAVACMPFTLLPNLMGTFIF) form a helical membrane-spanning segment. Residues 121 to 127 (GTVVCKA) lie on the Extracellular side of the membrane. C125 and C203 form a disulfide bridge. Residues 128–148 (VSYFMGVSVSVSTLSLVAIAL) form a helical membrane-spanning segment. At 149–171 (ERYSAICRPLQARVWQTRSHAAR) the chain is on the cytoplasmic side. The chain crosses the membrane as a helical span at residues 172-192 (VIVATWMLSGLLMVPYPVYTA). The Extracellular segment spans residues 193–218 (VQPAGPRVLQCMHRWPSARIRQTWSV). The chain crosses the membrane as a helical span at residues 219–239 (LLLLLLFFVPGVVMAVAYGLI). At 240–339 (SRELYLGLRF…LLAKKRVVRM (100 aa)) the chain is on the cytoplasmic side. Residues 256-285 (ESQSQVGSQGGLPGGAGQGPAHPNGHCRSE) are disordered. Over residues 263–273 (SQGGLPGGAGQ) the composition is skewed to gly residues. Residues 340–360 (LLVIVVLFFLCWLPVYSANTW) traverse the membrane as a helical segment. The Extracellular portion of the chain corresponds to 361–376 (RAFDGPGAHRALSGAP). A helical transmembrane segment spans residues 377–397 (ISFIHLLSYASACVNPLVYCF). Residues 398–452 (MHRRFRQACLDTCARCCPRPPRARPRPLPDEDPPTPSIASLSRLSYTTISTLGPG) lie on the Cytoplasmic side of the membrane. C413 carries S-palmitoyl cysteine lipidation.

This sequence belongs to the G-protein coupled receptor 1 family.

It is found in the cell membrane. Its function is as follows. Receptor for gastrin and cholecystokinin. The CCK-B receptors occur throughout the central nervous system where they modulate anxiety, analgesia, arousal, and neuroleptic activity. This receptor mediates its action by association with G proteins that activate a phosphatidylinositol-calcium second messenger system. The sequence is that of Gastrin/cholecystokinin type B receptor from Sus scrofa (Pig).